A 201-amino-acid polypeptide reads, in one-letter code: Probable cobalt-precorrin-6B C(15)-methyltransferase (decarboxylating) (201 aa).

Residues Thr28, 52-56 (GTGTG), Asp76, and Ala105 each bind S-adenosyl-L-methionine.

This sequence belongs to the methyltransferase superfamily. Archaeal-type CbiT family.

It carries out the reaction Co-precorrin-6B + S-adenosyl-L-methionine = Co-precorrin-7 + S-adenosyl-L-homocysteine + CO2. The protein operates within cofactor biosynthesis; adenosylcobalamin biosynthesis; cob(II)yrinate a,c-diamide from sirohydrochlorin (anaerobic route): step 8/10. Its function is as follows. Catalyzes the methylation of C-15 in cobalt-precorrin-6B followed by the decarboxylation of C-12 to form cobalt-precorrin-7. The protein is Probable cobalt-precorrin-6B C(15)-methyltransferase (decarboxylating) of Thermoplasma volcanium (strain ATCC 51530 / DSM 4299 / JCM 9571 / NBRC 15438 / GSS1).